The following is a 517-amino-acid chain: Putative thymidine phosphorylase (517 aa).

The protein belongs to the thymidine/pyrimidine-nucleoside phosphorylase family. Type 2 subfamily.

The enzyme catalyses thymidine + phosphate = 2-deoxy-alpha-D-ribose 1-phosphate + thymine. This is Putative thymidine phosphorylase from Legionella pneumophila subsp. pneumophila (strain Philadelphia 1 / ATCC 33152 / DSM 7513).